Reading from the N-terminus, the 399-residue chain is Tryptophan synthase beta chain (399 aa).

Lysine 92 carries the N6-(pyridoxal phosphate)lysine modification.

This sequence belongs to the TrpB family. In terms of assembly, tetramer of two alpha and two beta chains. It depends on pyridoxal 5'-phosphate as a cofactor.

It catalyses the reaction (1S,2R)-1-C-(indol-3-yl)glycerol 3-phosphate + L-serine = D-glyceraldehyde 3-phosphate + L-tryptophan + H2O. The protein operates within amino-acid biosynthesis; L-tryptophan biosynthesis; L-tryptophan from chorismate: step 5/5. The beta subunit is responsible for the synthesis of L-tryptophan from indole and L-serine. The sequence is that of Tryptophan synthase beta chain from Oceanobacillus iheyensis (strain DSM 14371 / CIP 107618 / JCM 11309 / KCTC 3954 / HTE831).